Here is a 238-residue protein sequence, read N- to C-terminus: tRNA (guanine-N(7)-)-methyltransferase (238 aa).

Residues glutamate 70, aspartate 95, aspartate 122, and aspartate 145 each contribute to the S-adenosyl-L-methionine site. The active site involves aspartate 145. Substrate contacts are provided by residues lysine 149, aspartate 181, and 216 to 219; that span reads TKFE.

It belongs to the class I-like SAM-binding methyltransferase superfamily. TrmB family.

It carries out the reaction guanosine(46) in tRNA + S-adenosyl-L-methionine = N(7)-methylguanosine(46) in tRNA + S-adenosyl-L-homocysteine. It participates in tRNA modification; N(7)-methylguanine-tRNA biosynthesis. In terms of biological role, catalyzes the formation of N(7)-methylguanine at position 46 (m7G46) in tRNA. This Neisseria meningitidis serogroup C / serotype 2a (strain ATCC 700532 / DSM 15464 / FAM18) protein is tRNA (guanine-N(7)-)-methyltransferase.